The primary structure comprises 782 residues: Protein NEDD1 (782 aa).

WD repeat units follow at residues 1 to 34, 41 to 80, 90 to 130, 133 to 172, 176 to 216, 220 to 260, 262 to 301, and 307 to 358; these read MMSN…GDPC, SPGC…LGTV, SAEE…CIKK, GHTS…RATE, PNGQ…PKMS, QHSA…SSSC, AYEA…QPVT, and SNSE…TPSA. 2 disordered regions span residues 350-393 and 467-512; these read PLPS…WPSG and PIFD…EAWG. Composition is skewed to polar residues over residues 352 to 362, 370 to 386, and 488 to 498; these read PSTTPSASQSA, VSAS…TPNR, and SFGSITPTASS. Positions 753–782 form a coiled coil; the sequence is VLSSILENQAEQMKELKLLRKENQELRQRL.

Expressed in root meristematic cells.

The protein resides in the nucleus envelope. It localises to the chromosome. It is found in the centromere. Its subcellular location is the kinetochore. The protein localises to the cytoplasm. The protein resides in the cytoskeleton. It localises to the phragmoplast. It is found in the microtubule organizing center. Functionally, regulates microtubules organization in a centrosome-independent manner. Required for the spindle to be positioned correctly and for the function of gamma-tubulin in organizing phragmoplast microtubules. Component of active gamma-tubulin ring complexes (gamma-TuRCs) associated with cortical microtubules in interphase cells. Mediates gamma-TuRC recruitment to the nucleation sites and is important for determining the ratio of branched to parallel nucleation. May mediate the localization of GCP2 and GCP3 to the nuclear envelope. This chain is Protein NEDD1, found in Arabidopsis thaliana (Mouse-ear cress).